Here is a 1893-residue protein sequence, read N- to C-terminus: Protein TIC 214 (1893 aa).

6 helical membrane-spanning segments follow: residues 18–38, 63–83, 87–107, 127–147, 175–195, and 224–244; these read IINS…FSIG, AITG…YAPL, LGRP…HFFW, LSIQ…HFIL, VGWL…LVWI, and IFSI…PSPI. 2 stretches are compositionally biased toward basic and acidic residues: residues 249 to 258 and 268 to 287; these read MKETSETEER and EIER…RSTE. Residues 249 to 317 are disordered; it reads MKETSETEER…TEEIRVNGKE (69 aa). Residues 298–309 are compositionally biased toward acidic residues; sequence EKEDPDKIDETE. Residues 1126-1146 traverse the membrane as a helical segment; that stretch reads LHYFIKFFIERIYIDILLCLI.

It belongs to the TIC214 family. Part of the Tic complex.

It is found in the plastid. It localises to the chloroplast inner membrane. Its function is as follows. Involved in protein precursor import into chloroplasts. May be part of an intermediate translocation complex acting as a protein-conducting channel at the inner envelope. The protein is Protein TIC 214 of Vitis vinifera (Grape).